Here is a 513-residue protein sequence, read N- to C-terminus: ATP synthase subunit alpha (513 aa).

An ATP-binding site is contributed by 169 to 176 (GDRQTGKT).

This sequence belongs to the ATPase alpha/beta chains family. F-type ATPases have 2 components, CF(1) - the catalytic core - and CF(0) - the membrane proton channel. CF(1) has five subunits: alpha(3), beta(3), gamma(1), delta(1), epsilon(1). CF(0) has three main subunits: a(1), b(2) and c(9-12). The alpha and beta chains form an alternating ring which encloses part of the gamma chain. CF(1) is attached to CF(0) by a central stalk formed by the gamma and epsilon chains, while a peripheral stalk is formed by the delta and b chains.

The protein resides in the cell inner membrane. The catalysed reaction is ATP + H2O + 4 H(+)(in) = ADP + phosphate + 5 H(+)(out). Functionally, produces ATP from ADP in the presence of a proton gradient across the membrane. The alpha chain is a regulatory subunit. This chain is ATP synthase subunit alpha, found in Bordetella avium (strain 197N).